We begin with the raw amino-acid sequence, 260 residues long: Transcription factor MYB4 (260 aa).

2 consecutive HTH myb-type domains span residues 12 to 64 and 65 to 119; these read AVEV…LNYL and RPGI…SKRS. DNA-binding regions (H-T-H motif) lie at residues 40 to 64 and 92 to 115; these read WRMLPAKAGLKRCGKSCRLRWLNYL and WSIIAGRIPGRTDNEIKNHWNTHL.

The protein localises to the nucleus. Functionally, transcription activator involved in the spatiotemporal regulation of flavonoid biosynthesis specifically in the corms of Montbretia. Activates the promoters of enzymes involved in the biosynthesis of the flavonol myricetin and the flavonol-glycoside montbretin A (MbA). MbA is a potent inhibitor of human pancreatic alpha-amylase and is being developed as drug candidate to treat type-2 diabetes. The chain is Transcription factor MYB4 from Crocosmia x crocosmiiflora (Montbretia).